We begin with the raw amino-acid sequence, 216 residues long: MSDKLVVWMDCEMTGLRLDSDKLIEVSALVTDSDLNILGDGVDIVIHADDAALAAMPPVVAEMHARSGLTDEVRRSTVTVAEAEQQVLDYIRQYVPTPRTVPLAGNSIATDRAFIARDMPALDAHLHYRMIDVSSIKELCRRWYPRIYFGQPEKGLTHRALADIKESIRELEYYRRTAFVAPPGPSTAEIAAVAAQLGGTAQTAESPQVEGTTQAD.

Residues 6-171 (VVWMDCEMTG…ADIKESIREL (166 aa)) enclose the Exonuclease domain. Tyr-128 is a catalytic residue.

The protein belongs to the oligoribonuclease family.

The protein resides in the cytoplasm. Its function is as follows. 3'-to-5' exoribonuclease specific for small oligoribonucleotides. The protein is Oligoribonuclease of Nocardia farcinica (strain IFM 10152).